We begin with the raw amino-acid sequence, 88 residues long: Arminin 1a (88 aa).

The signal sequence occupies residues 1–18 (MKTVLAFLFLPFIAFTHA). A propeptide spanning residues 19–57 (ESYEDVKEEIKNEAEKEIFEDLEEESDALDSSVREFNDA) is cleaved from the precursor. At Val-85 the chain carries Valine amide.

It belongs to the arminin family. Expressed in entodermal epithelium along the body column.

It is found in the secreted. The protein localises to the target cell membrane. In terms of biological role, antimicrobial peptide with a broad-spectrum antimicrobial activity. Shows very strong bactericidal activity against B.megaterium (MBC=0.1 uM), E.coli (MBC=0.2 uM), S.aureus (MBC=0.4 uM), methicillin-resistant S.aureus (MRSA) (MBC=0.4-0.8 uM), vancomycin-resistant enterococci (VRE) (E.faecalis (MBC=1.6 uM), and E.faecium (MBC=0.4-0.8 uM)), and extended-spectrum beta-lactamase (ESBL)-producing enterobacteriaceae strains (K.pneumoniae (MBC=0.4-0.8 uM), E.coli (MBC=0.2-0.4 uM)). Keeps its antibacterial activity under a wide range of salt concentrations that mimic physiological conditions of human blood, which is surprising, since Hydra is an obligate freshwater animal with nearly no salt tolerance. Does not affect red blood cells. This Hydra vulgaris (Hydra) protein is Arminin 1a.